We begin with the raw amino-acid sequence, 414 residues long: Enterobactin exporter EntS (414 aa).

Over 1–21 (MNRQSWLLNLSLLKTHPAFRA) the chain is Cytoplasmic. A helical transmembrane segment spans residues 22-42 (VFLARFISIVSLGLLGVAVPV). Residues 43-55 (QIQMMTHSTWQVG) lie on the Periplasmic side of the membrane. A helical transmembrane segment spans residues 56-76 (LSVTLTGGAMFIGLMVGGVLA). The Cytoplasmic segment spans residues 77 to 83 (DRYERKK). The chain crosses the membrane as a helical span at residues 84 to 104 (VILLARGTCGIGFIGLCVNAL). Over 105–109 (LPEPS) the chain is Periplasmic. Residues 110-130 (LLAIYLLGLWDGFFASLGVTA) traverse the membrane as a helical segment. The Cytoplasmic portion of the chain corresponds to 131 to 156 (LLAATPALVGRENLMQAGAITMLTVR). Residues 157–177 (LGSVISPMLGGILLASGGVAW) form a helical membrane-spanning segment. Residue Asn178 is a topological domain, periplasmic. The chain crosses the membrane as a helical span at residues 179 to 199 (YGLAAAGTFITLLPLLTLPRL). The Cytoplasmic segment spans residues 200–218 (PVPPQPRENPFIALLAAFR). A helical transmembrane segment spans residues 219 to 239 (FLLASPLIGGIALLGGLVTMA). Residues 240–256 (SAVRVLYPALAMSWQMS) are Periplasmic-facing. Residues 257–277 (AAQIGLLYAAIPLGAAIGALT) form a helical membrane-spanning segment. At 278–287 (SGQLAHSVRP) the chain is on the cytoplasmic side. Residues 288–307 (GLIMLVSTVGSFLAVGLFAI) traverse the membrane as a helical segment. Residues 308–313 (MPVWIA) are Periplasmic-facing. A helical transmembrane segment spans residues 314–336 (GVICLALFGWLSAISSLLQYTLL). Residues 337–356 (QTQTPENMLGRMNGLWTAQN) lie on the Cytoplasmic side of the membrane. A helical membrane pass occupies residues 357-377 (VTGDAIGAALLGGLGAMMTPV). A topological domain (periplasmic) is located at residue Ala378. The chain crosses the membrane as a helical span at residues 379–399 (SASVSGFGLVIIGLLLLLVLG). Residues 400–414 (ELRRFRQTPPVSDAG) are Cytoplasmic-facing.

It belongs to the major facilitator superfamily. EntS (TC 2.A.1.38) family.

Its subcellular location is the cell inner membrane. In terms of biological role, component of an export pathway for enterobactin. The sequence is that of Enterobactin exporter EntS from Salmonella typhimurium (strain LT2 / SGSC1412 / ATCC 700720).